A 381-amino-acid polypeptide reads, in one-letter code: uncharacterized protein (381 aa).

Transmembrane regions (helical) follow at residues 22-42 (GVLL…YLTA) and 246-266 (LIPE…LLVA).

It is found in the cell membrane. This is an uncharacterized protein from Mycobacterium tuberculosis (strain ATCC 25618 / H37Rv).